The following is a 141-amino-acid chain: Small ribosomal subunit protein bS6 (141 aa).

Residues 96 to 141 are disordered; the sequence is VTGQSEMLKAEENRSERRERRERPEHADSAEGDDSNDSDSSDNADE. Basic and acidic residues predominate over residues 103 to 124; sequence LKAEENRSERRERRERPEHADS. The span at 125-141 shows a compositional bias: acidic residues; that stretch reads AEGDDSNDSDSSDNADE.

The protein belongs to the bacterial ribosomal protein bS6 family.

Its function is as follows. Binds together with bS18 to 16S ribosomal RNA. This chain is Small ribosomal subunit protein bS6, found in Pseudomonas putida (strain ATCC 700007 / DSM 6899 / JCM 31910 / BCRC 17059 / LMG 24140 / F1).